The sequence spans 344 residues: L-rhamnose-proton symporter (344 aa).

Helical transmembrane passes span 4-24 (AITM…CFYA), 38-58 (WSVG…ALLL), 68-88 (FSLS…IGNI), 101-121 (MGIG…TPII), 137-157 (TLLG…AGQL), 175-195 (LVLA…MNAA), 214-234 (LPSY…FCFI), 259-279 (VLLS…YAWG), 290-310 (ISWM…GLVL), and 323-343 (VLSL…IGMA).

Belongs to the L-rhamnose transporter (TC 2.A.7.6) family.

It is found in the cell inner membrane. It carries out the reaction L-rhamnopyranose(in) + H(+)(in) = L-rhamnopyranose(out) + H(+)(out). Uptake of L-rhamnose across the cytoplasmic membrane with the concomitant transport of protons into the cell (symport system). The polypeptide is L-rhamnose-proton symporter (Shigella flexneri).